We begin with the raw amino-acid sequence, 397 residues long: Elongation factor Tu (397 aa).

In terms of domain architecture, tr-type G spans 10–206; sequence KPHVNVGTIG…TMDTYFPQPE (197 aa). The tract at residues 19–26 is G1; it reads GHVDHGKT. Residue 19 to 26 participates in GTP binding; the sequence is GHVDHGKT. Position 26 (threonine 26) interacts with Mg(2+). Positions 60 to 64 are G2; it reads GITIA. The tract at residues 81 to 84 is G3; sequence DCPG. Residues 81–85 and 136–139 each bind GTP; these read DCPGH and NKAD. A G4 region spans residues 136 to 139; the sequence is NKAD. A G5 region spans residues 174–176; the sequence is SAL.

The protein belongs to the TRAFAC class translation factor GTPase superfamily. Classic translation factor GTPase family. EF-Tu/EF-1A subfamily. Monomer.

The protein localises to the cytoplasm. It carries out the reaction GTP + H2O = GDP + phosphate + H(+). GTP hydrolase that promotes the GTP-dependent binding of aminoacyl-tRNA to the A-site of ribosomes during protein biosynthesis. This Coxiella burnetii (strain Dugway 5J108-111) protein is Elongation factor Tu.